A 403-amino-acid chain; its full sequence is Golgin-45 (403 aa).

A disordered region spans residues 1–63 (MEKMTTLKSS…PRKKVSSDSP (63 aa)). The short motif at 22–26 (RGAGD) is the Tankyrase-binding motif element. At S53 the chain carries Phosphoserine. Residues 123–216 (RKELSEVKKV…QLERMSIQCD (94 aa)) are a coiled coil. S356 bears the Phosphoserine mark. The interval 397–403 (QGELIAL) is essential for interaction with GORASP2.

As to quaternary structure, interacts with GORASP2. Interacts with the GTP-bound form of RAB2, but not with other Golgi Rab proteins. Identified in a complex with RAB2 and GORASP2. ADP-ribosylated by tankyrase TNKS and TNKS2. Poly-ADP-ribosylated protein is recognized by RNF146, followed by ubiquitination. Post-translationally, ubiquitinated by RNF146 when poly-ADP-ribosylated, leading to its degradation.

It localises to the golgi apparatus membrane. Its function is as follows. Required for normal Golgi structure and for protein transport from the endoplasmic reticulum (ER) through the Golgi apparatus to the cell surface. This is Golgin-45 (Blzf1) from Mus musculus (Mouse).